Here is a 33-residue protein sequence, read N- to C-terminus: Antimicrobial peptide MBP-1 (33 aa).

In terms of tissue distribution, predominantly in the embryo portion of the kernel.

Its subcellular location is the secreted. Its function is as follows. Inhibitor of both bacterial and fungal growth in vitro. This is Antimicrobial peptide MBP-1 from Zea mays (Maize).